The following is a 477-amino-acid chain: RTX-I toxin determinant D (477 aa).

Residues methionine 1 to leucine 59 lie on the Cytoplasmic side of the membrane. The helical transmembrane segment at isoleucine 60–valine 80 threads the bilayer. Residues glutamate 81–arginine 477 are Periplasmic-facing.

Belongs to the membrane fusion protein (MFP) (TC 8.A.1) family.

Its subcellular location is the cell inner membrane. Involved in the transport of the toxin RTX-I as well as that of RTX-II. This chain is RTX-I toxin determinant D (apxID), found in Actinobacillus pleuropneumoniae (Haemophilus pleuropneumoniae).